Here is a 377-residue protein sequence, read N- to C-terminus: Glutamate 5-kinase (377 aa).

Lys-20 serves as a coordination point for ATP. Residues Ser-60, Asp-147, and Asn-159 each contribute to the substrate site. 179-180 serves as a coordination point for ATP; sequence TD. The 79-residue stretch at 285 to 363 folds into the PUA domain; sequence AGRLVIDDGA…DKVYQVLGEA (79 aa).

This sequence belongs to the glutamate 5-kinase family.

Its subcellular location is the cytoplasm. The catalysed reaction is L-glutamate + ATP = L-glutamyl 5-phosphate + ADP. It participates in amino-acid biosynthesis; L-proline biosynthesis; L-glutamate 5-semialdehyde from L-glutamate: step 1/2. Its function is as follows. Catalyzes the transfer of a phosphate group to glutamate to form L-glutamate 5-phosphate. This chain is Glutamate 5-kinase, found in Acinetobacter baumannii (strain SDF).